The sequence spans 88 residues: Small ribosomal subunit protein bS20 (88 aa).

This sequence belongs to the bacterial ribosomal protein bS20 family.

In terms of biological role, binds directly to 16S ribosomal RNA. This is Small ribosomal subunit protein bS20 from Chelativorans sp. (strain BNC1).